A 262-amino-acid chain; its full sequence is Apolipoprotein A-I (262 aa).

Positions 1-18 (MKFLALALTILLAAATQA) are cleaved as a signal peptide. The tract at residues 32–63 (VKVAMMEYMAQVKETGQRSIDLLDDTEFKEYK) is 3 X approximate tandem repeats. 2 tandem repeats follow at residues 64-85 (VQLS…QSLA) and 87-107 (YSEA…AEVM). The segment at 64–262 (VQLSQSLDNL…YETISQAMKA (199 aa)) is 10 X approximate tandem repeats. The stretch at 108-118 (KDVEDVRTQLE) is one 3; half-length repeat. Tandem repeats lie at residues 119–140 (PKRA…KKLE), 141–162 (PLIK…VKME), 163–184 (PVVE…AKLM), 185–206 (PIVE…TLAA), and 207–228 (PYAE…EKVG). The 9; half-length repeat unit spans residues 229-239 (PLTNDFKGQVG). The stretch at 240–262 (PAAEQAKEKLMDFYETISQAMKA) is repeat 10.

It belongs to the apolipoprotein A1/A4/E family.

The protein resides in the secreted. In terms of biological role, participates in the reverse transport of cholesterol from tissues to the liver for excretion by promoting cholesterol efflux from tissues and by acting as a cofactor for the lecithin cholesterol acyltransferase (LCAT). The sequence is that of Apolipoprotein A-I (apoa1) from Salmo trutta (Brown trout).